Consider the following 262-residue polypeptide: [LysW]-aminoadipate/[LysW]-glutamate kinase (262 aa).

Substrate contacts are provided by residues 35-36 (GG), arginine 62, and asparagine 167.

The protein belongs to the acetylglutamate kinase family. LysZ subfamily.

Its subcellular location is the cytoplasm. It catalyses the reaction [amino-group carrier protein]-C-terminal-N-(1,4-dicarboxybutan-1-yl)-L-glutamine + ATP = [amino-group carrier protein]-C-terminal-N-(1-carboxy-5-phosphooxy-5-oxopentan-1-yl)-L-glutamine + ADP. The catalysed reaction is [amino-group carrier protein]-C-terminal-gamma-(L-glutamyl)-L-glutamate + ATP = [amino-group carrier protein]-C-terminal-gamma-(5-phospho-L-glutamyl)-L-glutamate + ADP. Its pathway is amino-acid biosynthesis; L-lysine biosynthesis via AAA pathway; L-lysine from L-alpha-aminoadipate (Thermus route): step 2/5. It functions in the pathway amino-acid biosynthesis; L-arginine biosynthesis. Involved in both the arginine and lysine biosynthetic pathways. Phosphorylates the LysW-bound precursors glutamate (for arginine biosynthesis), respectively alpha-aminoadipate (for lysine biosynthesis). The sequence is that of [LysW]-aminoadipate/[LysW]-glutamate kinase from Metallosphaera sedula (strain ATCC 51363 / DSM 5348 / JCM 9185 / NBRC 15509 / TH2).